Here is a 127-residue protein sequence, read N- to C-terminus: ATP synthase epsilon chain (127 aa).

This sequence belongs to the ATPase epsilon chain family. F-type ATPases have 2 components, CF(1) - the catalytic core - and CF(0) - the membrane proton channel. CF(1) has five subunits: alpha(3), beta(3), gamma(1), delta(1), epsilon(1). CF(0) has three main subunits: a, b and c.

It localises to the cell inner membrane. In terms of biological role, produces ATP from ADP in the presence of a proton gradient across the membrane. The polypeptide is ATP synthase epsilon chain (Leptospira interrogans serogroup Icterohaemorrhagiae serovar copenhageni (strain Fiocruz L1-130)).